We begin with the raw amino-acid sequence, 333 residues long: Fatty acid hydroxylase domain-containing protein 2 (333 aa).

6 helical membrane passes run 29 to 49, 77 to 97, 134 to 154, 168 to 188, 215 to 235, and 237 to 257; these read FILGSGLLSFVAFWNSVTWHL, ILFFIGAIQVPCLFFWSFNGL, TVLFNQCMISFPMVVFLYPFL, FHWFLLELAIFTLIEEVLFYY, VISLYAHPIEHAVSNMLPVIV, and PLVMGSHLSSITMWFSLALII. Residues 176–299 enclose the Fatty acid hydroxylase domain; it reads AIFTLIEEVL…LGVLDHLHGT (124 aa).

Belongs to the sterol desaturase family. In terms of tissue distribution, down-regulated in primary acute myeloid leukemia (AML) patients.

It is found in the cytoplasm. Its subcellular location is the membrane. Promotes megakaryocyte differentiation by enhancing ERK phosphorylation and up-regulating RUNX1 expression. The chain is Fatty acid hydroxylase domain-containing protein 2 (FAXDC2) from Homo sapiens (Human).